Reading from the N-terminus, the 264-residue chain is MVKPLPRLRLQGFNNLTKALSFNIYDVCYARTEEERQRYIEYIDEQYDADRLTQILTDVAEIIGANILNIARQDYDPQGASVTILISEEPVIDKKQAGRELISDAVVAHMDKSHITVHTYPETHPQEGIATFRADIDVATCGVISPLKALNYLIETLESDIVIMDYRVRGFTRDVKGKKHYIDHKINSIQHFLAKNVKSRYEMIDVNVYQENIFHTKMHLKDFDLDQYLFEERAKNLSFKERMKIETLLKREIEELFHGRNLSE.

Ser-113 acts as the Schiff-base intermediate with substrate; via pyruvic acid in catalysis. Ser-113 bears the Pyruvic acid (Ser); by autocatalysis mark. His-118 serves as the catalytic Proton acceptor; for processing activity. The active-site Proton donor; for catalytic activity is Cys-141.

Belongs to the prokaryotic AdoMetDC family. Type 2 subfamily. As to quaternary structure, heterooctamer of four alpha and four beta chains arranged as a tetramer of alpha/beta heterodimers. Requires pyruvate as cofactor. Is synthesized initially as an inactive proenzyme. Formation of the active enzyme involves a self-maturation process in which the active site pyruvoyl group is generated from an internal serine residue via an autocatalytic post-translational modification. Two non-identical subunits are generated from the proenzyme in this reaction, and the pyruvate is formed at the N-terminus of the alpha chain, which is derived from the carboxyl end of the proenzyme. The post-translation cleavage follows an unusual pathway, termed non-hydrolytic serinolysis, in which the side chain hydroxyl group of the serine supplies its oxygen atom to form the C-terminus of the beta chain, while the remainder of the serine residue undergoes an oxidative deamination to produce ammonia and the pyruvoyl group blocking the N-terminus of the alpha chain.

It carries out the reaction S-adenosyl-L-methionine + H(+) = S-adenosyl 3-(methylsulfanyl)propylamine + CO2. It functions in the pathway amine and polyamine biosynthesis; S-adenosylmethioninamine biosynthesis; S-adenosylmethioninamine from S-adenosyl-L-methionine: step 1/1. Its function is as follows. Catalyzes the decarboxylation of S-adenosylmethionine to S-adenosylmethioninamine (dcAdoMet), the propylamine donor required for the synthesis of the polyamines spermine and spermidine from the diamine putrescine. The sequence is that of S-adenosylmethionine decarboxylase proenzyme from Xanthomonas oryzae pv. oryzae (strain MAFF 311018).